We begin with the raw amino-acid sequence, 491 residues long: UDP-N-acetylmuramate--L-alanine ligase (491 aa).

Residue 126–132 (GTHGKTT) coordinates ATP.

This sequence belongs to the MurCDEF family.

It localises to the cytoplasm. It catalyses the reaction UDP-N-acetyl-alpha-D-muramate + L-alanine + ATP = UDP-N-acetyl-alpha-D-muramoyl-L-alanine + ADP + phosphate + H(+). The protein operates within cell wall biogenesis; peptidoglycan biosynthesis. Cell wall formation. The sequence is that of UDP-N-acetylmuramate--L-alanine ligase from Salmonella gallinarum (strain 287/91 / NCTC 13346).